The chain runs to 486 residues: Non-structural protein 1 (486 aa).

The segment at 1–81 (MATFKDACYY…CFLDDEPHLL (81 aa)) is RNA-binding. The tract at residues 42-79 (CLDCCQHTDLTYCRGCSIYHVCQWCNQYGRCFLDDEPH) is zinc-binding domain. An important for cytoskeleton localization region spans residues 82-176 (RMRTFKNNVT…INQTPFSFVN (95 aa)). The interval 317 to 486 (EVHNCRWCSV…DYDSGVSDVE (170 aa)) is interaction with host IRF3. The IKBKB-like degron (ILD) motif signature appears at 479–483 (DSGVS). Positions 480–483 (SGVS) match the pLxIS motif motif.

Belongs to the rotavirus NSP1 family. In terms of assembly, interacts (via C-terminus) with host IRF3; this interaction leads to IRF3 degradation. Interacts with host IRF7; this interaction leads to IRF7 degradation. Interacts with host CUL1 and CUL3. Interacts with host BTRC. The C-terminal region is phosphorylated by host CKII/CSNK2A1. Phosphorylation of the DSGXS motif is essential for host NF-kappa-B inhibition.

The protein localises to the host cytoplasm. The protein resides in the host cytoskeleton. Its function is as follows. Plays a role in the inhibition of host innate immunity by inducing the degradation of key host factors required to activate interferon production such as IRF3, IRF5 or IRF7. Associates with components of cullin RING ligases (CRLs) including CUL1 or CUL3, which are essential multisubunit ubiquitination complexes, to modulate their activities. Recognizes the host NF-kappa-B regulator BTRC through the presence of a DSGXS motif in the C-terminal substrate recognition domain. The polypeptide is Non-structural protein 1 (Sus scrofa (Pig)).